The primary structure comprises 77 residues: Lantipeptide prochlorosin 4.3 (77 aa).

The propeptide occupies 1-64 (MSEEQLKAFI…DDELEGVAGG (64 aa)). A 2,3-didehydrobutyrine modification is found at Thr-65. The lanthionine (Ser-Cys) cross-link spans 67–70 (SGGC). The beta-methyllanthionine (Thr-Cys) cross-link spans 72–76 (TSMFC).

Cross-links are proved in vitro, when coepressed in E.coli with the ProcM lanthionine synthetase. Post-translationally, the lanthionine residue has both a DL configuration (with 2S,6R stereochemistry) and a LL configuration (with 2R,6R stereochemistry). DL and LL diastomers have a 4:1 ratio. It is unknown whether nonenzymatic cyclization occur, but authors favor a model in which ProcM does generate all thioether cross-links. The beta-methyllanthionine residue has a DL configuration (with 2S,3S,6R stereochemistry). In terms of processing, maturation of prochlorosin involves the enzymatic conversion of Thr, and Ser into dehydrated AA and the formation of thioether bonds with cysteines. This is followed by membrane translocation and cleavage of the modified precursor.

It is found in the secreted. Lanthionine-containing peptide (lantipeptide) with unknown function. Does not show antibiotic activity against Lactococcus lactis 117 and Bacillus subtilis 6633 bacteria. Organisms that produce this peptide live in oligotrophic environments at very dilute concentrations, suggesting this peptide is not secreted to influence other bacteria. This is Lantipeptide prochlorosin 4.3 from Prochlorococcus marinus (strain MIT 9313).